The following is a 355-amino-acid chain: Homeobox protein knotted-1-like LET6 (355 aa).

A disordered region spans residues 75–96 (PFMDNNNNNNPQEDNNSSSSSI). Residues 79 to 96 (NNNNNNPQEDNNSSSSSI) show a composition bias toward low complexity. Positions 237–257 (ELKGQLLRKYSGYLGSLKQEF) constitute an ELK domain. Positions 258–321 (MKKRKKGKLP…NQRKRHWKPS (64 aa)) form a DNA-binding region, homeobox; TALE-type.

Belongs to the TALE/KNOX homeobox family. In terms of tissue distribution, expressed in developing lateral organs and developing ovaries in flowers.

It is found in the nucleus. In terms of biological role, may have a role to play in formative events in ovule and embryo morphogenesis. Probably binds to the DNA sequence 5'-TGAC-3'. The chain is Homeobox protein knotted-1-like LET6 (LET6) from Solanum lycopersicum (Tomato).